A 586-amino-acid polypeptide reads, in one-letter code: Pyruvate kinase (586 aa).

Arginine 32 contacts substrate. Residues asparagine 34, serine 36, aspartate 66, and threonine 67 each contribute to the K(+) site. 34–37 contacts ATP; the sequence is NFSH. Arginine 73 and lysine 156 together coordinate ATP. A Mg(2+)-binding site is contributed by glutamate 222. Glycine 245, aspartate 246, and threonine 278 together coordinate substrate. Aspartate 246 is a binding site for Mg(2+).

Belongs to the pyruvate kinase family. The protein in the C-terminal section; belongs to the PEP-utilizing enzyme family. It depends on Mg(2+) as a cofactor. The cofactor is K(+).

It catalyses the reaction pyruvate + ATP = phosphoenolpyruvate + ADP + H(+). It participates in carbohydrate degradation; glycolysis; pyruvate from D-glyceraldehyde 3-phosphate: step 5/5. The chain is Pyruvate kinase (pyk) from Staphylococcus saprophyticus subsp. saprophyticus (strain ATCC 15305 / DSM 20229 / NCIMB 8711 / NCTC 7292 / S-41).